The primary structure comprises 533 residues: 2-succinyl-5-enolpyruvyl-6-hydroxy-3-cyclohexene-1-carboxylate synthase (533 aa).

It belongs to the TPP enzyme family. MenD subfamily. In terms of assembly, homodimer. Mg(2+) is required as a cofactor. The cofactor is Mn(2+). Thiamine diphosphate serves as cofactor.

It carries out the reaction isochorismate + 2-oxoglutarate + H(+) = 5-enolpyruvoyl-6-hydroxy-2-succinyl-cyclohex-3-ene-1-carboxylate + CO2. It functions in the pathway quinol/quinone metabolism; 1,4-dihydroxy-2-naphthoate biosynthesis; 1,4-dihydroxy-2-naphthoate from chorismate: step 2/7. The protein operates within quinol/quinone metabolism; menaquinone biosynthesis. Its function is as follows. Catalyzes the thiamine diphosphate-dependent decarboxylation of 2-oxoglutarate and the subsequent addition of the resulting succinic semialdehyde-thiamine pyrophosphate anion to isochorismate to yield 2-succinyl-5-enolpyruvyl-6-hydroxy-3-cyclohexene-1-carboxylate (SEPHCHC). The chain is 2-succinyl-5-enolpyruvyl-6-hydroxy-3-cyclohexene-1-carboxylate synthase from Akkermansia muciniphila (strain ATCC BAA-835 / DSM 22959 / JCM 33894 / BCRC 81048 / CCUG 64013 / CIP 107961 / Muc).